Consider the following 385-residue polypeptide: 8-amino-7-oxononanoate synthase (385 aa).

R21 contributes to the substrate binding site. Pyridoxal 5'-phosphate is bound at residue 108 to 109; that stretch reads GY. H133 is a binding site for substrate. Pyridoxal 5'-phosphate contacts are provided by S179, H207, and T233. K236 bears the N6-(pyridoxal phosphate)lysine mark. T350 serves as a coordination point for substrate.

Belongs to the class-II pyridoxal-phosphate-dependent aminotransferase family. BioF subfamily. Homodimer. Requires pyridoxal 5'-phosphate as cofactor.

It catalyses the reaction 6-carboxyhexanoyl-[ACP] + L-alanine + H(+) = (8S)-8-amino-7-oxononanoate + holo-[ACP] + CO2. The protein operates within cofactor biosynthesis; biotin biosynthesis. Functionally, catalyzes the decarboxylative condensation of pimeloyl-[acyl-carrier protein] and L-alanine to produce 8-amino-7-oxononanoate (AON), [acyl-carrier protein], and carbon dioxide. This is 8-amino-7-oxononanoate synthase from Pectobacterium atrosepticum (strain SCRI 1043 / ATCC BAA-672) (Erwinia carotovora subsp. atroseptica).